A 245-amino-acid polypeptide reads, in one-letter code: 23S rRNA (guanosine-2'-O-)-methyltransferase RlmB (245 aa).

S-adenosyl-L-methionine contacts are provided by G197, I217, and L226.

The protein belongs to the class IV-like SAM-binding methyltransferase superfamily. RNA methyltransferase TrmH family. RlmB subfamily.

It is found in the cytoplasm. It carries out the reaction guanosine(2251) in 23S rRNA + S-adenosyl-L-methionine = 2'-O-methylguanosine(2251) in 23S rRNA + S-adenosyl-L-homocysteine + H(+). Functionally, specifically methylates the ribose of guanosine 2251 in 23S rRNA. In Photobacterium profundum (strain SS9), this protein is 23S rRNA (guanosine-2'-O-)-methyltransferase RlmB.